Reading from the N-terminus, the 340-residue chain is ATP-dependent 6-phosphofructokinase (340 aa).

Position 11 (Gly-11) interacts with ATP. Residue 21 to 25 (RAVVR) participates in ADP binding. Residues 72-73 (RY) and 102-105 (GDGS) each bind ATP. Asp-103 serves as a coordination point for Mg(2+). Residue 125-127 (TID) participates in substrate binding. Asp-127 serves as the catalytic Proton acceptor. Arg-154 contacts ADP. Residues Arg-162 and 169–171 (MGR) each bind substrate. Residues 185–187 (GAD), Lys-211, and 213–215 (KNH) contribute to the ADP site. Substrate is bound by residues Glu-222, Arg-244, and 250–253 (HIQR).

It belongs to the phosphofructokinase type A (PFKA) family. ATP-dependent PFK group I subfamily. Prokaryotic clade 'B1' sub-subfamily. Homotetramer. Requires Mg(2+) as cofactor.

The protein localises to the cytoplasm. The enzyme catalyses beta-D-fructose 6-phosphate + ATP = beta-D-fructose 1,6-bisphosphate + ADP + H(+). It participates in carbohydrate degradation; glycolysis; D-glyceraldehyde 3-phosphate and glycerone phosphate from D-glucose: step 3/4. With respect to regulation, allosterically activated by ADP and other diphosphonucleosides, and allosterically inhibited by phosphoenolpyruvate. Functionally, catalyzes the phosphorylation of D-fructose 6-phosphate to fructose 1,6-bisphosphate by ATP, the first committing step of glycolysis. The sequence is that of ATP-dependent 6-phosphofructokinase from Lactococcus lactis subsp. lactis (Streptococcus lactis).